The primary structure comprises 130 residues: Albumin-1 E (130 aa).

An N-terminal signal peptide occupies residues 1–26 (MASVKLASLIVLFATLGMFLTKNVGA). 3 disulfides stabilise this stretch: Cys29–Cys46, Cys33–Cys48, and Cys41–Cys58. Propeptides lie at residues 64-69 (VFLKGN) and 123-130 (LLKSVSTA).

In terms of processing, the C-terminal glycine may be removed from PA1b.

Functionally, PA1b binds to basic 7S globulin (BG) and stimulates its phosphorylation activity. Involved in the signal transduction system to regulate the growth and differentiation as a hormone peptide. Toxic to various insects through binding to a high affinity binding site in the insect gut. This chain is Albumin-1 E, found in Pisum sativum (Garden pea).